The sequence spans 622 residues: Probable potassium transport system protein Kup (622 aa).

The next 12 helical transmembrane spans lie at 9–29 (LPAV…TSPL), 52–72 (FLSL…LAFV), 101–121 (VLLV…VITP), 137–157 (PALT…LFVI), 169–189 (FGPV…ISIF), 213–233 (VAFF…ALYA), 247–267 (WFTV…ALIL), 287–309 (FPMV…SGVF), 337–357 (IYIP…VVTF), 363–383 (LAAA…ILAC), 396–416 (VVKI…LANV), and 419–439 (FFAG…VMAT).

The protein belongs to the HAK/KUP transporter (TC 2.A.72) family.

It localises to the cell inner membrane. The catalysed reaction is K(+)(in) + H(+)(in) = K(+)(out) + H(+)(out). Functionally, transport of potassium into the cell. Likely operates as a K(+):H(+) symporter. This is Probable potassium transport system protein Kup from Tolumonas auensis (strain DSM 9187 / NBRC 110442 / TA 4).